We begin with the raw amino-acid sequence, 234 residues long: Inner membrane protein YbhL (234 aa).

Over 1–23 (MDRFPRSDSIVQPRAGLQTYMAQ) the chain is Periplasmic. The helical transmembrane segment at 24-44 (VYGWMTVGLLLTAFVAWYAAN) threads the bilayer. Topologically, residues 45-56 (SAAVMELLFTNR) are cytoplasmic. A helical transmembrane segment spans residues 57 to 77 (VFLIGLIIAQLALVIVLSAMI). Residues 78 to 79 (QK) lie on the Periplasmic side of the membrane. The chain crosses the membrane as a helical span at residues 80 to 100 (LSAGVTTMLFMLYSALTGLTL). The Cytoplasmic portion of the chain corresponds to 101-102 (SS). A helical membrane pass occupies residues 103-123 (IFIVYTAASIASTFVVTAGMF). Topologically, residues 124 to 136 (GAMSLYGYTTKRD) are periplasmic. A helical membrane pass occupies residues 137-157 (LSGFGNMLFMALIGIVLASLV). At 158–163 (NFWLKS) the chain is on the cytoplasmic side. A helical transmembrane segment spans residues 164–184 (EALMWAVTYIGVIVFVGLTAY). At 185-206 (DTQKLKNMGEQIDTRDTSNLRK) the chain is on the periplasmic side. A helical transmembrane segment spans residues 207 to 227 (YSILGALTLYLDFINLFLMLL). Topologically, residues 228 to 234 (RIFGNRR) are cytoplasmic.

Belongs to the BI1 family.

The protein resides in the cell inner membrane. The polypeptide is Inner membrane protein YbhL (ybhL) (Escherichia coli (strain K12)).